Reading from the N-terminus, the 376-residue chain is Queuine tRNA-ribosyltransferase (376 aa).

Residue aspartate 93 is the Proton acceptor of the active site. Substrate-binding positions include 93 to 97 (DSGGF), aspartate 147, glutamine 190, and glycine 217. Residues 248-254 (GVGKPGD) are RNA binding. Catalysis depends on aspartate 267, which acts as the Nucleophile. Zn(2+) contacts are provided by cysteine 305, cysteine 307, cysteine 310, and histidine 336.

This sequence belongs to the queuine tRNA-ribosyltransferase family. In terms of assembly, homodimer. Within each dimer, one monomer is responsible for RNA recognition and catalysis, while the other monomer binds to the replacement base PreQ1. It depends on Zn(2+) as a cofactor.

The catalysed reaction is 7-aminomethyl-7-carbaguanine + guanosine(34) in tRNA = 7-aminomethyl-7-carbaguanosine(34) in tRNA + guanine. It functions in the pathway tRNA modification; tRNA-queuosine biosynthesis. Catalyzes the base-exchange of a guanine (G) residue with the queuine precursor 7-aminomethyl-7-deazaguanine (PreQ1) at position 34 (anticodon wobble position) in tRNAs with GU(N) anticodons (tRNA-Asp, -Asn, -His and -Tyr). Catalysis occurs through a double-displacement mechanism. The nucleophile active site attacks the C1' of nucleotide 34 to detach the guanine base from the RNA, forming a covalent enzyme-RNA intermediate. The proton acceptor active site deprotonates the incoming PreQ1, allowing a nucleophilic attack on the C1' of the ribose to form the product. After dissociation, two additional enzymatic reactions on the tRNA convert PreQ1 to queuine (Q), resulting in the hypermodified nucleoside queuosine (7-(((4,5-cis-dihydroxy-2-cyclopenten-1-yl)amino)methyl)-7-deazaguanosine). The chain is Queuine tRNA-ribosyltransferase from Dinoroseobacter shibae (strain DSM 16493 / NCIMB 14021 / DFL 12).